The chain runs to 267 residues: Ubiquinone biosynthesis protein COQ4, mitochondrial (267 aa).

The N-terminal 17 residues, Met1–Phe17, are a transit peptide targeting the mitochondrion. Positions 153, 154, 157, and 169 each coordinate Zn(2+).

Belongs to the COQ4 family. In terms of assembly, component of a multi-subunit COQ enzyme complex, composed of at least COQ3, COQ4, COQ5, COQ6, COQ7 and COQ9. The cofactor is Zn(2+).

It localises to the mitochondrion inner membrane. The enzyme catalyses a 4-hydroxy-3-methoxy-5-(all-trans-polyprenyl)benzoate + H(+) = a 2-methoxy-6-(all-trans-polyprenyl)phenol + CO2. The protein operates within cofactor biosynthesis; ubiquinone biosynthesis. Its function is as follows. Lyase that catalyzes the C1-decarboxylation of 4-hydroxy-3-methoxy-5-(all-trans-polyprenyl)benzoic acid into 2-methoxy-6-(all-trans-polyprenyl)phenol during ubiquinone biosynthesis. This chain is Ubiquinone biosynthesis protein COQ4, mitochondrial, found in Arthroderma otae (strain ATCC MYA-4605 / CBS 113480) (Microsporum canis).